A 142-amino-acid chain; its full sequence is Large ribosomal subunit protein uL13 (142 aa).

Belongs to the universal ribosomal protein uL13 family. In terms of assembly, part of the 50S ribosomal subunit.

Its function is as follows. This protein is one of the early assembly proteins of the 50S ribosomal subunit, although it is not seen to bind rRNA by itself. It is important during the early stages of 50S assembly. The protein is Large ribosomal subunit protein uL13 of Methanosphaera stadtmanae (strain ATCC 43021 / DSM 3091 / JCM 11832 / MCB-3).